The following is a 368-amino-acid chain: GDP-fucose transporter 1 (368 aa).

9 helical membrane-spanning segments follow: residues Leu-64–Leu-84, Leu-98–Ile-118, Val-141–Tyr-161, Phe-166–Leu-186, Thr-195–Phe-215, Trp-217–Val-237, Leu-251–Gly-271, Phe-287–Met-307, and Ala-332–Ile-352.

Belongs to the TPT transporter family. SLC35C subfamily.

It is found in the golgi apparatus membrane. The enzyme catalyses GMP(out) + GDP-beta-L-fucose(in) = GMP(in) + GDP-beta-L-fucose(out). Its function is as follows. Antiporter specific for GDP-l-fucose and depending on the concomitant reverse transport of GMP. Involved in GDP-fucose import from the cytoplasm into the Golgi lumen. The chain is GDP-fucose transporter 1 (slc35c1) from Dictyostelium discoideum (Social amoeba).